The sequence spans 272 residues: Oligodendrocyte transcription factor 3 (272 aa).

The span at 1-14 (MNSDSSSVSSRASS) shows a compositional bias: low complexity. A disordered region spans residues 1-71 (MNSDSSSVSS…KAAGESSKYK (71 aa)). The segment covering 24-33 (DHHHRHHHHQ) has biased composition (basic residues). Over residues 36–46 (RLNSVSSTQGD) the composition is skewed to polar residues. Positions 68 to 89 (SKYKIKKQLSEQDLQQLRLKIN) form a coiled coil. The bHLH domain maps to 83 to 137 (QLRLKINGRERKRMHDLNLAMDGLREVMPYAHGPSVRKLSKIATLLLARNYILML).

It localises to the nucleus. May determine the distinct specification program of class A neurons in the dorsal part of the spinal cord and suppress specification of class B neurons. This is Oligodendrocyte transcription factor 3 (OLIG3) from Homo sapiens (Human).